The sequence spans 431 residues: Adenylosuccinate synthetase (431 aa).

Residues 12–18 and 40–42 each bind GTP; these read GDEGKGK and GHT. Catalysis depends on aspartate 13, which acts as the Proton acceptor. 2 residues coordinate Mg(2+): aspartate 13 and glycine 40. Residues 13-16, 38-41, threonine 129, arginine 143, glutamine 224, threonine 239, and arginine 303 each bind IMP; these read DEGK and NAGH. The active-site Proton donor is the histidine 41. 299–305 provides a ligand contact to substrate; that stretch reads TVSNRQR. Residues arginine 305, 331–333, and 413–415 each bind GTP; these read KLD and STG.

Belongs to the adenylosuccinate synthetase family. As to quaternary structure, homodimer. It depends on Mg(2+) as a cofactor.

It is found in the cytoplasm. The catalysed reaction is IMP + L-aspartate + GTP = N(6)-(1,2-dicarboxyethyl)-AMP + GDP + phosphate + 2 H(+). It functions in the pathway purine metabolism; AMP biosynthesis via de novo pathway; AMP from IMP: step 1/2. Its function is as follows. Plays an important role in the de novo pathway of purine nucleotide biosynthesis. Catalyzes the first committed step in the biosynthesis of AMP from IMP. The sequence is that of Adenylosuccinate synthetase from Ehrlichia canis (strain Jake).